We begin with the raw amino-acid sequence, 419 residues long: UDP-N-acetylglucosamine 1-carboxyvinyltransferase 1 (419 aa).

Residue 22 to 23 coordinates phosphoenolpyruvate; it reads KN. Position 92 (Arg92) interacts with UDP-N-acetyl-alpha-D-glucosamine. Residue Cys116 is the Proton donor of the active site. Cys116 is modified (2-(S-cysteinyl)pyruvic acid O-phosphothioketal). UDP-N-acetyl-alpha-D-glucosamine is bound by residues 121–125, Asp306, and Ile328; that span reads RPIDL.

The protein belongs to the EPSP synthase family. MurA subfamily.

It localises to the cytoplasm. It carries out the reaction phosphoenolpyruvate + UDP-N-acetyl-alpha-D-glucosamine = UDP-N-acetyl-3-O-(1-carboxyvinyl)-alpha-D-glucosamine + phosphate. The protein operates within cell wall biogenesis; peptidoglycan biosynthesis. In terms of biological role, cell wall formation. Adds enolpyruvyl to UDP-N-acetylglucosamine. The chain is UDP-N-acetylglucosamine 1-carboxyvinyltransferase 1 from Streptococcus agalactiae serotype Ia (strain ATCC 27591 / A909 / CDC SS700).